The sequence spans 237 residues: MKVGIIGAMKEEVTLLCQKIQSCQTLTRAGCSIYSGFLGETNVVLLQSGIGKTSAALGTTLLLEYFQPDILINTGSAAGLWPDLKIGDIVISTEVRYHDVNVTAFGYEWGQMALCPPAFFADKKLIEIVLECVKNLNLNAVQGLICSGDAFINGDQALDRIRTFFPKAVAVEMEAAAIAQVCHQFETPFVVIRAISDVADQASHLSFEQFLCIAAQRSSTVIENMLPILAETYCSIN.

E12 (proton acceptor) is an active-site residue. Substrate is bound by residues A78, I152, and M173–E174. The active-site Proton donor is D197.

Belongs to the PNP/UDP phosphorylase family. MtnN subfamily. In terms of assembly, homodimer.

The enzyme catalyses S-adenosyl-L-homocysteine + H2O = S-(5-deoxy-D-ribos-5-yl)-L-homocysteine + adenine. It catalyses the reaction S-methyl-5'-thioadenosine + H2O = 5-(methylsulfanyl)-D-ribose + adenine. The catalysed reaction is 5'-deoxyadenosine + H2O = 5-deoxy-D-ribose + adenine. It functions in the pathway amino-acid biosynthesis; L-methionine biosynthesis via salvage pathway; S-methyl-5-thio-alpha-D-ribose 1-phosphate from S-methyl-5'-thioadenosine (hydrolase route): step 1/2. In terms of biological role, catalyzes the irreversible cleavage of the glycosidic bond in both 5'-methylthioadenosine (MTA) and S-adenosylhomocysteine (SAH/AdoHcy) to adenine and the corresponding thioribose, 5'-methylthioribose and S-ribosylhomocysteine, respectively. Also cleaves 5'-deoxyadenosine, a toxic by-product of radical S-adenosylmethionine (SAM) enzymes, into 5-deoxyribose and adenine. Thus, is required for in vivo function of the radical SAM enzymes biotin synthase and lipoic acid synthase, that are inhibited by 5'-deoxyadenosine accumulation. The polypeptide is 5'-methylthioadenosine/S-adenosylhomocysteine nucleosidase (Hamiltonella defensa subsp. Acyrthosiphon pisum (strain 5AT)).